The chain runs to 537 residues: Chaperonin GroEL 2 (537 aa).

ATP is bound by residues 29–32 (TLGP), 86–90 (DGTTT), Gly-412, and Asp-495.

Belongs to the chaperonin (HSP60) family. Forms a cylinder of 14 subunits composed of two heptameric rings stacked back-to-back. Interacts with the co-chaperonin GroES.

It is found in the cytoplasm. It catalyses the reaction ATP + H2O + a folded polypeptide = ADP + phosphate + an unfolded polypeptide.. Its function is as follows. Together with its co-chaperonin GroES, plays an essential role in assisting protein folding. The GroEL-GroES system forms a nano-cage that allows encapsulation of the non-native substrate proteins and provides a physical environment optimized to promote and accelerate protein folding. The sequence is that of Chaperonin GroEL 2 from Paenarthrobacter aurescens (strain TC1).